The chain runs to 1295 residues: Serine protease sat autotransporter (1295 aa).

Positions 1-49 (MNKIYSLKYSAATGGLIAVSELAKRVSGKTNRKLVATMLSLAVAGTVNA) are cleaved as a signal peptide. A Peptidase S6 domain is found at 51–300 (NIDISNVWAR…TKYNDKLVSE (250 aa)). Catalysis depends on charge relay system residues histidine 121, aspartate 149, and serine 256. Residues 1029–1295 (DINGESGAWA…AINANFRYSF (267 aa)) enclose the Autotransporter domain.

Post-translationally, cleaved to release the mature protein from the outer membrane.

The protein localises to the periplasm. It is found in the secreted. It localises to the cell surface. The protein resides in the cell outer membrane. With respect to regulation, inhibited by phenylmethylsulfonyl fluoride and Pefabloc. Its function is as follows. Shows serine protease activity and displays cytophatic activity, including elongation, rounding, and detachment of a proportion of the cells from monolayer in culture. Triggers vacuolation within the cytoplasm of the human bladder and kidney cells. The protein is Serine protease sat autotransporter (sat) of Escherichia coli O6:H1 (strain CFT073 / ATCC 700928 / UPEC).